The sequence spans 281 residues: Inositol diphosphatase SIW14 (281 aa).

Residues 1 to 20 (MGLYQAKNDEGSDPKSSSKI) are disordered. Over residues 7–20 (KNDEGSDPKSSSKI) the composition is skewed to basic and acidic residues. A Phosphoserine modification is found at S94. A Tyrosine-protein phosphatase domain is found at 121–271 (NFSHVVGEIY…YDDDEIKRIA (151 aa)). Residues N189, I190, and H193 each coordinate 1D-myo-inositol hexakisphosphate. C214 (phosphocysteine intermediate) is an active-site residue.

The protein belongs to the protein-tyrosine phosphatase family. Atypical dual-specificity phosphatase Siw14-like subfamily. In terms of assembly, monomer.

The protein localises to the cytoplasm. It carries out the reaction 5-diphospho-1D-myo-inositol 1,2,3,4,6-pentakisphosphate + H2O = 1D-myo-inositol hexakisphosphate + phosphate + H(+). The catalysed reaction is 5-diphospho-1D-myo-inositol 1,3,4,6-tetrakisphosphate + H2O = 1D-myo-inositol 1,3,4,5,6-pentakisphosphate + phosphate + H(+). The enzyme catalyses 3,5-bis(diphospho)-1D-myo-inositol 1,2,4,6-tetrakisphosphate + H2O = 3-diphospho-1D-myo-inositol 1,2,4,5,6-pentakisphosphate + phosphate + 2 H(+). It catalyses the reaction 1,5-bis(diphospho)-1D-myo-inositol 2,3,4,6-tetrakisphosphate + H2O = 1-diphospho-1D-myo-inositol 2,3,4,5,6-pentakisphosphate + phosphate + 2 H(+). It carries out the reaction 6-diphospho-1D-myo-inositol pentakisphosphate + H2O = 1D-myo-inositol hexakisphosphate + phosphate + H(+). In terms of biological role, selectively cleaves the beta-phosphate at the 5-position of soluble inositol pyrophosphates. Converts 5-diphosphoinositol tetrakisphosphate (5-PP-InsP(4)) into inositol pentakisphosphate (InsP(5)), 5-diphosphoinositol pentakisphosphate (5-PP-IP(5) or 5-InsP(7)) into inositol hexakisphosphate (IP(6) or InsP(6)), and 1,5-bisdiphosphoinositol tetrakisphosphate (1,5-PP-IP(5) or InsP(8)) into 1-diphosphoinositol pentakisphosphate (1-PP-IP(5) or 1-InsP(7)). Also has activity on 1,5-bis-diphosphoinositol 2,3,4,6-tetrakisphosphate (1,5-InsP(8)) and 3,5-InsP(8). Modulates inositol pyrophosphate metabolism that may have an influence in stress response. Plays a role in actin filament organization and endocytosis. Functions as a prion suppressing factor possibly due to its phosphatase activity against inositol pyrophosphates, which are signal transduction molecules involved in prion propagation. This chain is Inositol diphosphatase SIW14 (SIW14), found in Saccharomyces cerevisiae (strain ATCC 204508 / S288c) (Baker's yeast).